Reading from the N-terminus, the 149-residue chain is MALYEHVFLARQDITPQQVDALVEQYKGVIEANGGKVGRVENWGLKSLTYRIKKNRKAHYVLMDIDAPAPAVHEVERQMRINEDVLRYMTIAVGKHEEGPSAMMQKRDRDDRPRRDGDRPDRGGFGDRGPRPDRGDRDDRPRRPREDRA.

Positions 93–149 (VGKHEEGPSAMMQKRDRDDRPRRDGDRPDRGGFGDRGPRPDRGDRDDRPRRPREDRA) are disordered. Residues 94 to 149 (GKHEEGPSAMMQKRDRDDRPRRDGDRPDRGGFGDRGPRPDRGDRDDRPRRPREDRA) are compositionally biased toward basic and acidic residues.

Belongs to the bacterial ribosomal protein bS6 family.

Functionally, binds together with bS18 to 16S ribosomal RNA. The sequence is that of Small ribosomal subunit protein bS6 from Rhizobium meliloti (strain 1021) (Ensifer meliloti).